Here is a 92-residue protein sequence, read N- to C-terminus: Small ribosomal subunit protein uS19 (92 aa).

This sequence belongs to the universal ribosomal protein uS19 family.

Functionally, protein S19 forms a complex with S13 that binds strongly to the 16S ribosomal RNA. This Cellvibrio japonicus (strain Ueda107) (Pseudomonas fluorescens subsp. cellulosa) protein is Small ribosomal subunit protein uS19.